Here is a 246-residue protein sequence, read N- to C-terminus: Large ribosomal subunit protein uL30 (246 aa).

The residue at position 1 (Met1) is an N-acetylmethionine. Repeat copies occupy residues 7-17, 18-28, 29-40, and 41-52. Residues 7–52 form a 4 X 12 AA tandem repeats region; the sequence is KKVPSVPESLLKRRQAYAAAKAKRLKRLLAQKKFRKAQRKIIYERA.

This sequence belongs to the universal ribosomal protein uL30 family. In terms of assembly, component of the large ribosomal subunit.

It is found in the cytoplasm. Component of the large ribosomal subunit. The ribosome is a large ribonucleoprotein complex responsible for the synthesis of proteins in the cell. Binds to G-rich structures in 28S rRNA and in mRNAs. Plays a regulatory role in the translation apparatus; inhibits cell-free translation of mRNAs. This chain is Large ribosomal subunit protein uL30 (RPL7), found in Gallus gallus (Chicken).